The chain runs to 407 residues: Nicotinate phosphoribosyltransferase (407 aa).

A Phosphohistidine; by autocatalysis modification is found at His224.

The protein belongs to the NAPRTase family. Post-translationally, transiently phosphorylated on a His residue during the reaction cycle. Phosphorylation strongly increases the affinity for substrates and increases the rate of nicotinate D-ribonucleotide production. Dephosphorylation regenerates the low-affinity form of the enzyme, leading to product release.

It catalyses the reaction nicotinate + 5-phospho-alpha-D-ribose 1-diphosphate + ATP + H2O = nicotinate beta-D-ribonucleotide + ADP + phosphate + diphosphate. It functions in the pathway cofactor biosynthesis; NAD(+) biosynthesis; nicotinate D-ribonucleotide from nicotinate: step 1/1. Its function is as follows. Catalyzes the synthesis of beta-nicotinate D-ribonucleotide from nicotinate and 5-phospho-D-ribose 1-phosphate at the expense of ATP. This chain is Nicotinate phosphoribosyltransferase, found in Pseudomonas syringae pv. tomato (strain ATCC BAA-871 / DC3000).